Consider the following 347-residue polypeptide: Eukaryotic translation initiation factor 3 subunit I (347 aa).

5 WD repeats span residues 8 to 49 (GHER…GTLD), 51 to 89 (HMGSIWSIDSDHTSLYCVTGSADYTIKVWTLMNGQCVQT), 149 to 190 (THEG…KLVE), 194 to 233 (VHKDSVSDLQFSPDRTYFITCSRDSNAHIIDIETFKVLKT), and 291 to 330 (GHFGPLNSIAVSPQGTSYTSGGEEGLVRLHHFEKSYFDFK).

It belongs to the eIF-3 subunit I family. Component of the eukaryotic translation initiation factor 3 (eIF-3) complex.

Its subcellular location is the cytoplasm. Its function is as follows. Component of the eukaryotic translation initiation factor 3 (eIF-3) complex, which is involved in protein synthesis of a specialized repertoire of mRNAs and, together with other initiation factors, stimulates binding of mRNA and methionyl-tRNAi to the 40S ribosome. The eIF-3 complex specifically targets and initiates translation of a subset of mRNAs involved in cell proliferation. The protein is Eukaryotic translation initiation factor 3 subunit I of Candida glabrata (strain ATCC 2001 / BCRC 20586 / JCM 3761 / NBRC 0622 / NRRL Y-65 / CBS 138) (Yeast).